We begin with the raw amino-acid sequence, 236 residues long: Syntaxin-8 (236 aa).

The Cytoplasmic segment spans residues 1-215 (MAPDPWFSTY…LVDRKSTSCG (215 aa)). A coiled-coil region spans residues 42-65 (LTIRTLLKNLKVKIDLLKDLLLRA). Positions 145 to 207 (QKIIQEQDAG…RTEARRVTLV (63 aa)) constitute a t-SNARE coiled-coil homology domain. A Phosphoserine modification is found at Ser-160. Residues 216-232 (MIMVILLLLVAIVVVAV) traverse the membrane as a helical; Anchor for type IV membrane protein segment. Residues 233 to 236 (WPTN) lie on the Vesicular side of the membrane.

This sequence belongs to the syntaxin family. As to quaternary structure, forms a SNARE complex with STX7, VTI1B and VAMP8 which functions in the homotypic fusion of late endosomes. Part of the SNARE core complex containing STX7, VAMP8 and VTI1B. Interacts with VAMP8. Interacts with HECTD3. Interacts with TPC1. Post-translationally, ubiquitinated by HECTD3.

The protein localises to the membrane. Its function is as follows. Vesicle trafficking protein that functions in the early secretory pathway, possibly by mediating retrograde transport from cis-Golgi membranes to the ER. This Mus musculus (Mouse) protein is Syntaxin-8 (Stx8).